Here is a 294-residue protein sequence, read N- to C-terminus: N-acetylmuramic acid 6-phosphate etherase (294 aa).

The SIS domain maps to 54-217 (VISSFQNGGR…STASMIGIGK (164 aa)). Glutamate 82 functions as the Proton donor in the catalytic mechanism. Residue glutamate 113 is part of the active site.

The protein belongs to the GCKR-like family. MurNAc-6-P etherase subfamily. Homodimer.

The enzyme catalyses N-acetyl-D-muramate 6-phosphate + H2O = N-acetyl-D-glucosamine 6-phosphate + (R)-lactate. It participates in amino-sugar metabolism; N-acetylmuramate degradation. Its function is as follows. Specifically catalyzes the cleavage of the D-lactyl ether substituent of MurNAc 6-phosphate, producing GlcNAc 6-phosphate and D-lactate. In Bacillus cytotoxicus (strain DSM 22905 / CIP 110041 / 391-98 / NVH 391-98), this protein is N-acetylmuramic acid 6-phosphate etherase.